Consider the following 596-residue polypeptide: Fructan 1-exohydrolase (596 aa).

A signal peptide spans 1-20; sequence MAQAWAFLLPVLVLGSYVTS. Residue D75 is part of the active site. N-linked (GlcNAc...) asparagine glycosylation is found at N168, N236, and N248. C446 and C492 are disulfide-bonded. A glycan (N-linked (GlcNAc...) asparagine) is linked at N567.

The protein belongs to the glycosyl hydrolase 32 family.

The enzyme catalyses Hydrolysis of terminal, non-reducing (2-&gt;1)-linked beta-D-fructofuranose residues in fructans.. With respect to regulation, inhibited by sucrose. In terms of biological role, hydrolyzes inulin-type beta-(2,1)-fructans. May play a role as a beta-(2,1)-trimmer during graminan biosynthesis. The chain is Fructan 1-exohydrolase from Aegilops tauschii (Tausch's goatgrass).